The primary structure comprises 515 residues: Ribonuclease Y (515 aa).

The helical transmembrane segment at 6–26 threads the bilayer; that stretch reads LTSFVIITLSLAVGLTGGYYG. Residues 205-290 enclose the KH domain; the sequence is TVSVVPLPND…EMVEKARKEI (86 aa). Positions 331–424 constitute an HD domain; sequence VLRHSVEVAH…VQAADAISAS (94 aa).

Belongs to the RNase Y family.

It localises to the cell membrane. Its function is as follows. Endoribonuclease that initiates mRNA decay. The protein is Ribonuclease Y of Syntrophomonas wolfei subsp. wolfei (strain DSM 2245B / Goettingen).